The following is a 509-amino-acid chain: ATP synthase subunit alpha (509 aa).

Position 169-176 (169-176 (GDRQTGKT)) interacts with ATP.

It belongs to the ATPase alpha/beta chains family. F-type ATPases have 2 components, CF(1) - the catalytic core - and CF(0) - the membrane proton channel. CF(1) has five subunits: alpha(3), beta(3), gamma(1), delta(1), epsilon(1). CF(0) has three main subunits: a(1), b(2) and c(9-12). The alpha and beta chains form an alternating ring which encloses part of the gamma chain. CF(1) is attached to CF(0) by a central stalk formed by the gamma and epsilon chains, while a peripheral stalk is formed by the delta and b chains.

The protein resides in the cell inner membrane. The catalysed reaction is ATP + H2O + 4 H(+)(in) = ADP + phosphate + 5 H(+)(out). Its function is as follows. Produces ATP from ADP in the presence of a proton gradient across the membrane. The alpha chain is a regulatory subunit. The polypeptide is ATP synthase subunit alpha (Methylorubrum populi (strain ATCC BAA-705 / NCIMB 13946 / BJ001) (Methylobacterium populi)).